A 294-amino-acid chain; its full sequence is Transmembrane protein 178B (294 aa).

The signal sequence occupies residues 1–23; the sequence is MAAGRLLLYTGLSLALCALGMLA. N-linked (GlcNAc...) asparagine glycans are attached at residues asparagine 148 and asparagine 152. The next 3 membrane-spanning stretches (helical) occupy residues 172 to 192, 206 to 226, and 252 to 272; these read AGFM…GVLG, LLFL…VAGI, and MFCA…CTLA.

It belongs to the TMEM178 family.

The protein localises to the membrane. This Homo sapiens (Human) protein is Transmembrane protein 178B (TMEM178B).